The primary structure comprises 185 residues: Ribosome-recycling factor (185 aa).

Belongs to the RRF family.

Its subcellular location is the cytoplasm. In terms of biological role, responsible for the release of ribosomes from messenger RNA at the termination of protein biosynthesis. May increase the efficiency of translation by recycling ribosomes from one round of translation to another. This is Ribosome-recycling factor from Clostridium acetobutylicum (strain ATCC 824 / DSM 792 / JCM 1419 / IAM 19013 / LMG 5710 / NBRC 13948 / NRRL B-527 / VKM B-1787 / 2291 / W).